The chain runs to 84 residues: Small ribosomal subunit protein uS17 (84 aa).

The protein belongs to the universal ribosomal protein uS17 family. Part of the 30S ribosomal subunit.

Its function is as follows. One of the primary rRNA binding proteins, it binds specifically to the 5'-end of 16S ribosomal RNA. The sequence is that of Small ribosomal subunit protein uS17 from Pectobacterium atrosepticum (strain SCRI 1043 / ATCC BAA-672) (Erwinia carotovora subsp. atroseptica).